An 854-amino-acid chain; its full sequence is Fibroblast growth factor receptor 1 (854 aa).

A signal peptide spans methionine 1–serine 20. Topologically, residues valine 21 to serine 383 are extracellular. In terms of domain architecture, Ig-like C2-type 1 spans proline 29 to threonine 120. The cysteines at positions 50 and 102 are disulfide-linked. Residues asparagine 95, asparagine 99, asparagine 110, asparagine 118, asparagine 140, asparagine 175, asparagine 202, asparagine 248, asparagine 283, asparagine 317, and asparagine 346 are each glycosylated (N-linked (GlcNAc...) asparagine). Ig-like C2-type domains follow at residues proline 147–threonine 259 and proline 268–isoleucine 369. Cysteine 166 and cysteine 242 are joined by a disulfide. A disulfide bond links cysteine 288 and cysteine 353. The chain crosses the membrane as a helical span at residues isoleucine 384–phenylalanine 404. Topologically, residues phenylalanine 405 to valine 854 are cytoplasmic. Residues lysine 551–isoleucine 822 enclose the Protein kinase domain. ATP is bound by residues leucine 557 to valine 565 and lysine 585. Aspartate 689 serves as the catalytic Proton acceptor. Residue tyrosine 718 is modified to Phosphotyrosine; by autocatalysis.

It belongs to the protein kinase superfamily. Tyr protein kinase family. Fibroblast growth factor receptor subfamily. In terms of tissue distribution, expressed in brain, stem cells and the mesenchymal cells.

Its subcellular location is the membrane. It carries out the reaction L-tyrosyl-[protein] + ATP = O-phospho-L-tyrosyl-[protein] + ADP + H(+). Its function is as follows. Receptor for basic fibroblast growth factor. The chain is Fibroblast growth factor receptor 1 (FGFR1) from Dugesia japonica (Planarian).